Here is a 445-residue protein sequence, read N- to C-terminus: Phosphoglucosamine mutase (445 aa).

Ser-102 functions as the Phosphoserine intermediate in the catalytic mechanism. Mg(2+)-binding residues include Ser-102, Asp-241, Asp-243, and Asp-245. Ser-102 is subject to Phosphoserine.

Belongs to the phosphohexose mutase family. It depends on Mg(2+) as a cofactor. Post-translationally, activated by phosphorylation.

The enzyme catalyses alpha-D-glucosamine 1-phosphate = D-glucosamine 6-phosphate. Its function is as follows. Catalyzes the conversion of glucosamine-6-phosphate to glucosamine-1-phosphate. This chain is Phosphoglucosamine mutase, found in Escherichia coli O157:H7.